The chain runs to 788 residues: Elongator complex protein 2 (788 aa).

WD repeat units lie at residues 13-51 (GANK…NKGV), 57-96 (GHEA…HLQC), 102-139 (HYSK…DEFG), 200-243 (GHED…LIDD), 279-318 (GHDD…GIWV), 336-377 (GSSG…ICDQ), 383-422 (GATK…ASGR), and 437-475 (IHGY…AGML). The interval 490-530 (PDSATVPVLGLSNKAGEDDANEDDEEEEGGNKETPDITDPL) is disordered. S492 bears the Phosphoserine mark. The span at 507 to 517 (DDANEDDEEEE) shows a compositional bias: acidic residues. WD repeat units lie at residues 556–600 (GHGF…EIKP), 604–643 (FHSL…NTFE), 651–692 (PHTR…ADDY), 699–742 (KHTK…FELI), and 750–788 (TPAD…LAYE).

It belongs to the WD repeat ELP2 family. As to quaternary structure, component of the elongator complex which consists of ELP1/IKI3, ELP2, ELP3, ELP4, ELP5/IKI1 and ELP6. The elongator complex is composed of two copies of the Elp123 subcomplex (composed of ELP1/IKI3, ELP2 and ELP3) and two copies of the Elp456 subcomplex (composed of ELP4, ELP5/IKI1 and ELP6). The Elp123 subcomplex forms a two-lobed scaffold, which binds the Elp456 subcomplex asymmetrically. In the complex, ELP2 interacts with ELP1/IKI3. In each lobe, ELP2 is tightly sandwiched between ELP1/IKI3 and ELP3. The Elp123 subcomplex binds tRNA through ELP1/IKI3 and ELP3 and can bind 2 tRNAs simultaneously. tRNA-binding induces conformational rearrangements which precisely position the targeted anticodon base in the active site. The Elp456 subcomplex binds tRNA and has ATPase activity. Interacts with KTI11/DPH3.

The protein resides in the cytoplasm. Its subcellular location is the nucleus. It participates in tRNA modification; 5-methoxycarbonylmethyl-2-thiouridine-tRNA biosynthesis. Component of the elongator complex, a multiprotein complex which is required for multiple tRNA modifications, including mcm5U (5-methoxycarbonylmethyl uridine), mcm5s2U (5-methoxycarbonylmethyl-2-thiouridine), and ncm5U (5-carbamoylmethyl uridine). The elongator complex catalyzes formation of carboxymethyluridine in the wobble base at position 34 in tRNAs. It functions as a gamma-toxin target (TOT); disruption of the complex confers resistance to Kluyveromyces lactis toxin zymocin (pGKL1 killer toxin). May also be involved in sensitivity to Pichia inositovora toxin. ELP2 binds to microtubules. Independently, ELP2 may be involved in polarized exocytosis. This Saccharomyces cerevisiae (strain ATCC 204508 / S288c) (Baker's yeast) protein is Elongator complex protein 2 (ELP2).